A 95-amino-acid chain; its full sequence is Pyrimidine/purine nucleoside phosphorylase (95 aa).

It belongs to the nucleoside phosphorylase PpnP family.

It catalyses the reaction a purine D-ribonucleoside + phosphate = a purine nucleobase + alpha-D-ribose 1-phosphate. It carries out the reaction adenosine + phosphate = alpha-D-ribose 1-phosphate + adenine. The enzyme catalyses cytidine + phosphate = cytosine + alpha-D-ribose 1-phosphate. The catalysed reaction is guanosine + phosphate = alpha-D-ribose 1-phosphate + guanine. It catalyses the reaction inosine + phosphate = alpha-D-ribose 1-phosphate + hypoxanthine. It carries out the reaction thymidine + phosphate = 2-deoxy-alpha-D-ribose 1-phosphate + thymine. The enzyme catalyses uridine + phosphate = alpha-D-ribose 1-phosphate + uracil. The catalysed reaction is xanthosine + phosphate = alpha-D-ribose 1-phosphate + xanthine. Catalyzes the phosphorolysis of diverse nucleosides, yielding D-ribose 1-phosphate and the respective free bases. Can use uridine, adenosine, guanosine, cytidine, thymidine, inosine and xanthosine as substrates. Also catalyzes the reverse reactions. This is Pyrimidine/purine nucleoside phosphorylase from Vibrio cholerae serotype O1 (strain ATCC 39315 / El Tor Inaba N16961).